A 606-amino-acid polypeptide reads, in one-letter code: Radial spoke head protein 3 homolog (606 aa).

The interval 1–103 (MARSEARRQA…NSPEAPPLDG (103 aa)) is disordered. Over residues 15–46 (PRAVPEERALRERRQPRPRREPLESGAGDHRR) the composition is skewed to basic and acidic residues. Thr-331 carries the post-translational modification Phosphothreonine; by MAPK1. The stretch at 393-429 (AYEELRNIELAEVQRLEEQERRHREEKERRKQQQWQV) forms a coiled coil. The tract at residues 520 to 606 (EGRHASVRPE…KSSKREELSQ (87 aa)) is disordered. Positions 547–556 (SQDQGASQAQ) are enriched in polar residues. Positions 572 to 604 (ARYAERVSSQERRLAEENDELTEMRKSSKREEL) form a coiled coil. Residues 573 to 606 (RYAERVSSQERRLAEENDELTEMRKSSKREELSQ) show a composition bias toward basic and acidic residues.

The protein belongs to the flagellar radial spoke RSP3 family. As to quaternary structure, component of the axonemal radial spoke 1 (RS1) and 2 (RS2) complexes, at least composed of spoke head proteins RSPH1, RSPH3, RSPH9 and the cilia-specific component RSPH4A or sperm-specific component RSPH6A, spoke stalk proteins RSPH14, DNAJB13, DYDC1, ROPN1L and NME5, and the RS1 complex-specific anchor protein IQUB. Interacts with IQUB. Interacts with phosphorylated MAPK1. Interacts with MEK1. Interacts with PKA regulatory subunits PRKAR1A and PRKAR1B. Interacts with RSPH1. Interacts with RSPH4A. Interacts with RSPH6A. Interacts with RSPH9. Interacts with LRRC23.

Its subcellular location is the cytoplasm. The protein localises to the cytoskeleton. It localises to the cilium axoneme. The protein resides in the flagellum axoneme. In terms of biological role, functions as part of axonemal radial spoke complexes that play an important part in the motility of sperm and cilia. Functions as a protein kinase A-anchoring protein that scaffolds the cAMP-dependent protein kinase holoenzyme. May serve as a point of convergence for MAPK and PKA signaling in cilia. This is Radial spoke head protein 3 homolog (RSPH3) from Bos taurus (Bovine).